Here is a 134-residue protein sequence, read N- to C-terminus: Putative toxin MJ0605 (134 aa).

The protein belongs to the UPF0332 family.

Its function is as follows. Putative toxin component of a putative type VII toxin-antitoxin (TA) system. Its cognate antitoxin might be MJ0604. The polypeptide is Putative toxin MJ0605 (Methanocaldococcus jannaschii (strain ATCC 43067 / DSM 2661 / JAL-1 / JCM 10045 / NBRC 100440) (Methanococcus jannaschii)).